A 509-amino-acid polypeptide reads, in one-letter code: Lysine--tRNA ligase (509 aa).

The Mg(2+) site is built by glutamate 419 and glutamate 426.

It belongs to the class-II aminoacyl-tRNA synthetase family. In terms of assembly, homodimer. The cofactor is Mg(2+).

The protein resides in the cytoplasm. The enzyme catalyses tRNA(Lys) + L-lysine + ATP = L-lysyl-tRNA(Lys) + AMP + diphosphate. The protein is Lysine--tRNA ligase of Methylobacillus flagellatus (strain ATCC 51484 / DSM 6875 / VKM B-1610 / KT).